A 379-amino-acid polypeptide reads, in one-letter code: Lipid-A-disaccharide synthase (379 aa).

The protein belongs to the LpxB family.

It carries out the reaction a lipid X + a UDP-2-N,3-O-bis[(3R)-3-hydroxyacyl]-alpha-D-glucosamine = a lipid A disaccharide + UDP + H(+). It participates in bacterial outer membrane biogenesis; LPS lipid A biosynthesis. In terms of biological role, condensation of UDP-2,3-diacylglucosamine and 2,3-diacylglucosamine-1-phosphate to form lipid A disaccharide, a precursor of lipid A, a phosphorylated glycolipid that anchors the lipopolysaccharide to the outer membrane of the cell. In Persephonella marina (strain DSM 14350 / EX-H1), this protein is Lipid-A-disaccharide synthase.